A 908-amino-acid chain; its full sequence is DNA mismatch repair protein MutS (908 aa).

629–636 (GPNMAGKS) contacts ATP. The segment at 822–863 (ADEADGAPSEDPPSEDPPSGDGVRAKKGEADAVPDLEDSQAN) is disordered.

This sequence belongs to the DNA mismatch repair MutS family.

Functionally, this protein is involved in the repair of mismatches in DNA. It is possible that it carries out the mismatch recognition step. This protein has a weak ATPase activity. The polypeptide is DNA mismatch repair protein MutS (Salinibacter ruber (strain DSM 13855 / M31)).